A 104-amino-acid chain; its full sequence is Vacuolar ATPase assembly integral membrane protein VMA21 (104 aa).

Topologically, residues 1 to 21 are cytoplasmic; that stretch reads MSNRVSTGKMAMAPQESVQPA. Residues 22–42 form a helical membrane-spanning segment; that stretch reads VLYKLVLFALLMAVVPIGTYF. Topologically, residues 43 to 65 are lumenal; that stretch reads STLNYLWDGASRCGFPSGLCSTT. A helical transmembrane segment spans residues 66–86; that stretch reads FAAISAIAAANLILVGYVVVA. The Cytoplasmic segment spans residues 87 to 104; the sequence is FREDAASRTGPLPEKKTS. The Prevents secretion from ER signature appears at 101-104; the sequence is KKTS.

The protein belongs to the VMA21 family.

Its subcellular location is the endoplasmic reticulum membrane. It is found in the endoplasmic reticulum-Golgi intermediate compartment membrane. The protein localises to the cytoplasmic vesicle. The protein resides in the COPII-coated vesicle membrane. Required for the assembly of the V0 complex of the vacuolar ATPase (V-ATPase) in the endoplasmic reticulum. The sequence is that of Vacuolar ATPase assembly integral membrane protein VMA21 from Cryptococcus neoformans var. neoformans serotype D (strain B-3501A) (Filobasidiella neoformans).